The chain runs to 296 residues: Chondrolectin (296 aa).

The first 20 residues, 1 to 20, serve as a signal peptide directing secretion; the sequence is MRATLRILCALTFLVSCSRG. Over 21 to 238 the chain is Extracellular; it reads ARVVSGQTVC…RLIIAGPSSM (218 aa). The 150-residue stretch at 38 to 187 folds into the C-type lectin domain; it reads CYKIAYFKDV…CNMKHNFICK (150 aa). Positions 197-221 are enriched in basic and acidic residues; the sequence is VQSDRPGGHDVDLSTEDKEDRRTPP. The segment at 197–229 is disordered; that stretch reads VQSDRPGGHDVDLSTEDKEDRRTPPTDEDESPR. Residues 239-266 form a helical membrane-spanning segment; that stretch reads LLIYVIIPTIPLLLLILVASGTCCFQML. At 267-296 the chain is on the cytoplasmic side; the sequence is SKSKPRTKTSVNQSTLWISKTPKIDSGMEV.

In terms of tissue distribution, expressed in developing motor neurons.

It is found in the membrane. In terms of biological role, plays a role in the development of the nervous system such as in neurite outgrowth and elongation. Involved in motor axon growth and guidance. Required for correct interactions of motor axons with the horizontal myoseptum. The chain is Chondrolectin (chodl) from Danio rerio (Zebrafish).